The sequence spans 96 residues: Large ribosomal subunit protein uL4 (96 aa).

Residues 77 to 96 (RAPNKKVKRRELKKNPLKNL) are disordered. Residues 79–96 (PNKKVKRRELKKNPLKNL) are compositionally biased toward basic residues.

It belongs to the universal ribosomal protein uL4 family. In terms of assembly, component of the large ribosomal subunit.

The protein localises to the cytoplasm. Its function is as follows. Component of the large ribosomal subunit. The ribosome is a large ribonucleoprotein complex responsible for the synthesis of proteins in the cell. In Xenopus tropicalis (Western clawed frog), this protein is Large ribosomal subunit protein uL4 (rpl4).